A 319-amino-acid polypeptide reads, in one-letter code: ATP-dependent 6-phosphofructokinase 1 (319 aa).

Gly11 is a binding site for ATP. 21-25 serves as a coordination point for ADP; that stretch reads RAVTR. ATP-binding positions include 72–73 and 102–105; these read RC and GDGS. Asp103 lines the Mg(2+) pocket. 125–127 contributes to the substrate binding site; it reads TID. The active-site Proton acceptor is the Asp127. Position 154 (Arg154) interacts with ADP. Substrate is bound by residues Arg162 and 169–171; that span reads MGR. ADP-binding positions include 185-187 and 213-215; these read GAE and KTH. Substrate is bound by residues Glu222, Arg243, and 249 to 252; that span reads HIQR.

It belongs to the phosphofructokinase type A (PFKA) family. ATP-dependent PFK group I subfamily. Prokaryotic clade 'B1' sub-subfamily. As to quaternary structure, homotetramer. Mg(2+) serves as cofactor.

The protein resides in the cytoplasm. The enzyme catalyses beta-D-fructose 6-phosphate + ATP = beta-D-fructose 1,6-bisphosphate + ADP + H(+). It functions in the pathway carbohydrate degradation; glycolysis; D-glyceraldehyde 3-phosphate and glycerone phosphate from D-glucose: step 3/4. Its activity is regulated as follows. Allosterically activated by ADP and other diphosphonucleosides, and allosterically inhibited by phosphoenolpyruvate. Its function is as follows. Catalyzes the phosphorylation of D-fructose 6-phosphate to fructose 1,6-bisphosphate by ATP, the first committing step of glycolysis. This is ATP-dependent 6-phosphofructokinase 1 from Clostridium perfringens (strain 13 / Type A).